The chain runs to 459 residues: tRNA modification GTPase MnmE (459 aa).

Arginine 29, glutamate 86, and lysine 125 together coordinate (6S)-5-formyl-5,6,7,8-tetrahydrofolate. The 162-residue stretch at 221–382 folds into the TrmE-type G domain; sequence GMNVVIAGRP…LTEHLKAVMG (162 aa). Asparagine 231 is a K(+) binding site. GTP contacts are provided by residues 231–236, 250–256, and 275–278; these read NAGKSS, TNIEGTT, and DTAG. A Mg(2+)-binding site is contributed by serine 235. Threonine 250, isoleucine 252, and threonine 255 together coordinate K(+). Residue threonine 256 participates in Mg(2+) binding. Lysine 459 contacts (6S)-5-formyl-5,6,7,8-tetrahydrofolate.

It belongs to the TRAFAC class TrmE-Era-EngA-EngB-Septin-like GTPase superfamily. TrmE GTPase family. Homodimer. Heterotetramer of two MnmE and two MnmG subunits. The cofactor is K(+).

Its subcellular location is the cytoplasm. Functionally, exhibits a very high intrinsic GTPase hydrolysis rate. Involved in the addition of a carboxymethylaminomethyl (cmnm) group at the wobble position (U34) of certain tRNAs, forming tRNA-cmnm(5)s(2)U34. This Marinomonas sp. (strain MWYL1) protein is tRNA modification GTPase MnmE.